The chain runs to 95 residues: MSYTIAAQVRTEIGKGSSRRLRHANKVPAVIYGPGKEAISIVFDHKDIINIQENQDFYTSELTIALEGKDVKVRVQDMQRHAFKPMIEHVDFKFA.

It belongs to the bacterial ribosomal protein bL25 family. Part of the 50S ribosomal subunit; part of the 5S rRNA/L5/L18/L25 subcomplex. Contacts the 5S rRNA. Binds to the 5S rRNA independently of L5 and L18.

Its function is as follows. This is one of the proteins that binds to the 5S RNA in the ribosome where it forms part of the central protuberance. This Shewanella halifaxensis (strain HAW-EB4) protein is Large ribosomal subunit protein bL25.